Here is a 275-residue protein sequence, read N- to C-terminus: MRLVILDDYALASEWAAKYICNCIIQFNPGPDKYFTLGLPTGSTPLGCYKKLIEYHKSGDLSFKYVKTFNMDEYVGLPRDHPESYHSYMWNNFFKHIDIDPNNAHILDGNASDLQAECEDFERKIKEAGGIELFVGGIGPDGHIAFNEPGSSLVSRTRLKTLAMDTILANAKYFDGDLSKVPTMALTVGVGTVMDAKEVMILITGAHKAFALYKAIEEGVNHMWTVSAFQQHPRTIFVCDEDATLELRVKTVKYFKGLMHVHNRLVDPLLSMKKN.

Asp72 (proton acceptor; for enolization step) is an active-site residue. Positions 102–131 (NNAHILDGNASDLQAECEDFERKIKEAGGI) form a coiled coil. The active-site For ring-opening step is Asp141. His143 acts as the Proton acceptor; for ring-opening step in catalysis. Catalysis depends on Glu148, which acts as the For ring-opening step.

Belongs to the glucosamine/galactosamine-6-phosphate isomerase family. Homohexamer.

It is found in the cytoplasm. The enzyme catalyses alpha-D-glucosamine 6-phosphate + H2O = beta-D-fructose 6-phosphate + NH4(+). Functionally, catalyzes the reversible conversion of alpha-D-glucosamine 6-phosphate (GlcN-6P) into beta-D-fructose 6-phosphate (Fru-6P) and ammonium ion, a regulatory reaction step in de novo uridine diphosphate-N-acetyl-alpha-D-glucosamine (UDP-GlcNAc) biosynthesis via hexosamine pathway. This Xenopus laevis (African clawed frog) protein is Glucosamine-6-phosphate deaminase 2.